The primary structure comprises 56 residues: Repressor-like protein SSo7c4 (56 aa).

Positions 4–51 (EEIVKVSRNYQVTIPAKVRQKFQIKEGDLVKVTFDESGGVVKIQLLDS) constitute a SpoVT-AbrB domain.

This Saccharolobus solfataricus (strain ATCC 35092 / DSM 1617 / JCM 11322 / P2) (Sulfolobus solfataricus) protein is Repressor-like protein SSo7c4.